Reading from the N-terminus, the 338-residue chain is Ankyrin-repeat domain containing transcription coregulator asaA (338 aa).

The segment covering 1–10 has biased composition (basic and acidic residues); it reads MGAPHEEIQA. Disordered stretches follow at residues 1–70 and 112–137; these read MGAP…LRST and ASSVSPSSSAGPLSSSPSPSQRPFID. A compositionally biased stretch (basic residues) spans 11–33; the sequence is LKRRREQNRLAQRRRRDNVRRRL. A compositionally biased stretch (polar residues) spans 42–70; sequence SPASASQTSLCSSTDSRVTLNPHQSLRST. Low complexity predominate over residues 112–130; sequence ASSVSPSSSAGPLSSSPSP. ANK repeat units follow at residues 235 to 264, 268 to 297, and 301 to 330; these read RWTTALHMAVSQGNFSVMRLLLSYGADPNA, EGATALHVGVMNGNYTMVAELLQRGADPTL, and AGWLPLHQAVHAGDEGCVRVLLEADQPVDY.

Its pathway is secondary metabolite biosynthesis. Functionally, transcription coregulator involved in regulation of gene cluster that mediates the biosynthesis of aspergillic acid, a hydroxamic acid-containing pyrazinone with aliphatic side chains that originates from leucine (Leu) and isoleucine (Ile). Aspergillic acid has antibiotic properties and was shown to be lethal to mice. The sequence is that of Ankyrin-repeat domain containing transcription coregulator asaA from Aspergillus flavus (strain ATCC 200026 / FGSC A1120 / IAM 13836 / NRRL 3357 / JCM 12722 / SRRC 167).